Here is a 100-residue protein sequence, read N- to C-terminus: Large ribosomal subunit protein uL23 (100 aa).

The protein belongs to the universal ribosomal protein uL23 family. In terms of assembly, part of the 50S ribosomal subunit. Contacts protein L29, and trigger factor when it is bound to the ribosome.

In terms of biological role, one of the early assembly proteins it binds 23S rRNA. One of the proteins that surrounds the polypeptide exit tunnel on the outside of the ribosome. Forms the main docking site for trigger factor binding to the ribosome. In Synechococcus sp. (strain CC9311), this protein is Large ribosomal subunit protein uL23.